Reading from the N-terminus, the 186-residue chain is Dihydrofolate reductase (186 aa).

A DHFR domain is found at 3–183 (KFSLIVAVCA…IQYQYRIYEK (181 aa)). Residues Ala-9 and 15-21 (GIGIKGD) each bind NADP(+). Substrate is bound at residue 29-34 (ELKYFS). Residue 53-55 (RKT) participates in NADP(+) binding. Substrate is bound at residue Arg-69. NADP(+) contacts are provided by residues 75–77 (TRD) and 116–123 (GGNAVYKE).

This sequence belongs to the dihydrofolate reductase family.

It catalyses the reaction (6S)-5,6,7,8-tetrahydrofolate + NADP(+) = 7,8-dihydrofolate + NADPH + H(+). Its pathway is cofactor biosynthesis; tetrahydrofolate biosynthesis; 5,6,7,8-tetrahydrofolate from 7,8-dihydrofolate: step 1/1. Functionally, key enzyme in folate metabolism. Catalyzes an essential reaction for de novo glycine and purine synthesis, and for DNA precursor synthesis. This chain is Dihydrofolate reductase (DHFR), found in Aedes albopictus (Asian tiger mosquito).